Consider the following 92-residue polypeptide: Small ribosomal subunit protein uS19c (92 aa).

It belongs to the universal ribosomal protein uS19 family.

It is found in the plastid. Its subcellular location is the chloroplast. In terms of biological role, protein S19 forms a complex with S13 that binds strongly to the 16S ribosomal RNA. This chain is Small ribosomal subunit protein uS19c, found in Daucus carota (Wild carrot).